The following is a 482-amino-acid chain: Exodeoxyribonuclease 7 large subunit (482 aa).

The segment at 457–482 (TLDTGGAPAKPASKPKQKPPEQGSLF) is disordered.

The protein belongs to the XseA family. Heterooligomer composed of large and small subunits.

It is found in the cytoplasm. The enzyme catalyses Exonucleolytic cleavage in either 5'- to 3'- or 3'- to 5'-direction to yield nucleoside 5'-phosphates.. Bidirectionally degrades single-stranded DNA into large acid-insoluble oligonucleotides, which are then degraded further into small acid-soluble oligonucleotides. The protein is Exodeoxyribonuclease 7 large subunit of Ruegeria pomeroyi (strain ATCC 700808 / DSM 15171 / DSS-3) (Silicibacter pomeroyi).